The sequence spans 301 residues: GTPase Era (301 aa).

The region spanning 7-175 (YCGFIAIVGR…AAIVRKHLPE (169 aa)) is the Era-type G domain. Residues 15-22 (GRPNVGKS) form a G1 region. Position 15 to 22 (15 to 22 (GRPNVGKS)) interacts with GTP. Residues 41 to 45 (QTTRH) are G2. The G3 stretch occupies residues 62-65 (DTPG). Residues 62 to 66 (DTPGL) and 124 to 127 (NKVD) each bind GTP. Residues 124 to 127 (NKVD) are G4. The tract at residues 154-156 (ISA) is G5. Positions 206 to 283 (LGAELPYSVT…HLELWVKVKS (78 aa)) constitute a KH type-2 domain.

Belongs to the TRAFAC class TrmE-Era-EngA-EngB-Septin-like GTPase superfamily. Era GTPase family. As to quaternary structure, monomer.

Its subcellular location is the cytoplasm. The protein localises to the cell inner membrane. An essential GTPase that binds both GDP and GTP, with rapid nucleotide exchange. Plays a role in 16S rRNA processing and 30S ribosomal subunit biogenesis and possibly also in cell cycle regulation and energy metabolism. The polypeptide is GTPase Era (Shigella flexneri).